Consider the following 222-residue polypeptide: Tegument protein UL26 (222 aa).

This sequence belongs to the herpesviridae US22 family. Interacts with UL25. Interacts with ISGylation machinery components ISG15, UBA7 and HERC5; these interactions inhibit global protein ISGylation. Post-translationally, ISGylated; ISGylation regulates UL26 stability and inhibits its activities to suppress NF-kappa-B signaling.

The protein resides in the virion tegument. It localises to the host nucleus. In terms of biological role, plays a role in the inhibition of host NF-kappa-B. This inhibition affects both the canonical and the non-canonical pathways. Blocks the induction of host IKK phosphorylation. May also influence the normal phosphorylation state of several tegument proteins including pp28 in virions. Also suppresses virus-induced ISGylation independent of its own ISGylation. The sequence is that of Tegument protein UL26 (UL26) from Homo sapiens (Human).